The chain runs to 262 residues: 3-methyl-2-oxobutanoate hydroxymethyltransferase (262 aa).

Mg(2+) contacts are provided by Asp-42 and Asp-81. 3-methyl-2-oxobutanoate-binding positions include 42 to 43 (DS), Asp-81, and Lys-110. Glu-112 contacts Mg(2+). The active-site Proton acceptor is Glu-180.

This sequence belongs to the PanB family. In terms of assembly, homodecamer; pentamer of dimers. It depends on Mg(2+) as a cofactor.

It is found in the cytoplasm. It carries out the reaction 3-methyl-2-oxobutanoate + (6R)-5,10-methylene-5,6,7,8-tetrahydrofolate + H2O = 2-dehydropantoate + (6S)-5,6,7,8-tetrahydrofolate. It participates in cofactor biosynthesis; (R)-pantothenate biosynthesis; (R)-pantoate from 3-methyl-2-oxobutanoate: step 1/2. Catalyzes the reversible reaction in which hydroxymethyl group from 5,10-methylenetetrahydrofolate is transferred onto alpha-ketoisovalerate to form ketopantoate. The chain is 3-methyl-2-oxobutanoate hydroxymethyltransferase from Legionella pneumophila (strain Lens).